The chain runs to 148 residues: 3-dehydroquinate dehydratase (148 aa).

Catalysis depends on Tyr-23, which acts as the Proton acceptor. Substrate-binding residues include Asn-75, His-81, and Asp-88. His-101 acts as the Proton donor in catalysis. Residues 102 to 103 (LS) and Arg-112 each bind substrate.

Belongs to the type-II 3-dehydroquinase family. In terms of assembly, homododecamer.

The enzyme catalyses 3-dehydroquinate = 3-dehydroshikimate + H2O. It functions in the pathway metabolic intermediate biosynthesis; chorismate biosynthesis; chorismate from D-erythrose 4-phosphate and phosphoenolpyruvate: step 3/7. Its function is as follows. Catalyzes a trans-dehydration via an enolate intermediate. This Xanthomonas axonopodis pv. citri (strain 306) protein is 3-dehydroquinate dehydratase.